Reading from the N-terminus, the 376-residue chain is Acetate kinase (376 aa).

Residue asparagine 7 participates in Mg(2+) binding. Lysine 14 is a binding site for ATP. Arginine 71 contributes to the substrate binding site. Residue aspartate 128 is the Proton donor/acceptor of the active site. ATP-binding positions include 188–192 (HLGNG), 262–264 (DFR), and 310–314 (GVGEN). Glutamate 364 is a Mg(2+) binding site.

It belongs to the acetokinase family. As to quaternary structure, homodimer. Requires Mg(2+) as cofactor. It depends on Mn(2+) as a cofactor.

The protein resides in the cytoplasm. It carries out the reaction acetate + ATP = acetyl phosphate + ADP. The protein operates within metabolic intermediate biosynthesis; acetyl-CoA biosynthesis; acetyl-CoA from acetate: step 1/2. In terms of biological role, catalyzes the formation of acetyl phosphate from acetate and ATP. Can also catalyze the reverse reaction. The chain is Acetate kinase from Mycolicibacterium smegmatis (strain ATCC 700084 / mc(2)155) (Mycobacterium smegmatis).